The primary structure comprises 95 residues: Small ribosomal subunit protein bS16 (95 aa).

Belongs to the bacterial ribosomal protein bS16 family.

This Roseiflexus sp. (strain RS-1) protein is Small ribosomal subunit protein bS16.